Reading from the N-terminus, the 138-residue chain is Large ribosomal subunit protein bL19 (138 aa).

Belongs to the bacterial ribosomal protein bL19 family.

Its function is as follows. This protein is located at the 30S-50S ribosomal subunit interface and may play a role in the structure and function of the aminoacyl-tRNA binding site. This Rickettsia akari (strain Hartford) protein is Large ribosomal subunit protein bL19.